The chain runs to 249 residues: Ribonuclease PH (249 aa).

Residues R86 and 124 to 126 (GTR) each bind phosphate.

The protein belongs to the RNase PH family. In terms of assembly, homohexameric ring arranged as a trimer of dimers.

It catalyses the reaction tRNA(n+1) + phosphate = tRNA(n) + a ribonucleoside 5'-diphosphate. Functionally, phosphorolytic 3'-5' exoribonuclease that plays an important role in tRNA 3'-end maturation. Removes nucleotide residues following the 3'-CCA terminus of tRNAs; can also add nucleotides to the ends of RNA molecules by using nucleoside diphosphates as substrates, but this may not be physiologically important. Probably plays a role in initiation of 16S rRNA degradation (leading to ribosome degradation) during starvation. This is Ribonuclease PH from Clostridium botulinum (strain Alaska E43 / Type E3).